Reading from the N-terminus, the 338-residue chain is MSIKVGINGFGRIGRILLSNALEKPELSVVAVNDPFIEPTYAAYMLKYDSSHGLFKGDIEVDGQNLVVNGKPIRFYSERDPANIKWSETGAEYIVESTGVFTTIDKAKAHLNGGAKKVIISAPSADAPMFVMGVNHKDYDGTPTVLSNASCTTNGLAPLVKIVNDNFGIVEGLMTTVHSYTATQKTVDGPSGKDWRGGRGAAQNIIPSSTGAAKAVGKVIPAMNGKITGMSFRVPSANVSVIDLTVRLEKAASYEEITSAIKKAADGELKGIMAYTSDEVVSTDMLGNNNSSIFDIKAGISLNPNFVKLVSWYDNEWGYSRRVLDLLEHVAKVDASKK.

Residues 12–13 (RI), aspartate 34, and arginine 79 each bind NAD(+). Residues 150-152 (SCT), threonine 181, 210-211 (TG), and arginine 233 contribute to the D-glyceraldehyde 3-phosphate site. Cysteine 151 functions as the Nucleophile in the catalytic mechanism. Asparagine 315 lines the NAD(+) pocket.

This sequence belongs to the glyceraldehyde-3-phosphate dehydrogenase family. As to quaternary structure, homotetramer.

It is found in the cytoplasm. It carries out the reaction D-glyceraldehyde 3-phosphate + phosphate + NAD(+) = (2R)-3-phospho-glyceroyl phosphate + NADH + H(+). It participates in carbohydrate degradation; glycolysis; pyruvate from D-glyceraldehyde 3-phosphate: step 1/5. The protein is Glyceraldehyde-3-phosphate dehydrogenase (gpd1) of Hypocrea atroviridis (Trichoderma atroviride).